Here is a 490-residue protein sequence, read N- to C-terminus: Tryptophan 5-hydroxylase 2 (490 aa).

A Phosphoserine modification is found at S19. The span at 31–42 (LGSSTLNKPNSG) shows a compositional bias: polar residues. Residues 31–58 (LGSSTLNKPNSGKNDDKGNKGSSKREAA) form a disordered region. The span at 43 to 58 (KNDDKGNKGSSKREAA) shows a compositional bias: basic and acidic residues. Residues 65–140 (AVVFSLKNEV…TIVTLNPPEN (76 aa)) enclose the ACT domain. Fe cation contacts are provided by H318, H323, and E363.

The protein belongs to the biopterin-dependent aromatic amino acid hydroxylase family. As to quaternary structure, interacts with DNAJC12. Fe(2+) serves as cofactor. Brain specific.

The enzyme catalyses (6R)-L-erythro-5,6,7,8-tetrahydrobiopterin + L-tryptophan + O2 = 5-hydroxy-L-tryptophan + (4aS,6R)-4a-hydroxy-L-erythro-5,6,7,8-tetrahydrobiopterin. Its pathway is aromatic compound metabolism; serotonin biosynthesis; serotonin from L-tryptophan: step 1/2. This Homo sapiens (Human) protein is Tryptophan 5-hydroxylase 2 (TPH2).